Here is a 284-residue protein sequence, read N- to C-terminus: 4-diphosphocytidyl-2-C-methyl-D-erythritol kinase (284 aa).

The active site involves Lys-14. 98–108 (PMGGGLGGGSS) contacts ATP. Asp-140 is a catalytic residue.

It belongs to the GHMP kinase family. IspE subfamily.

It catalyses the reaction 4-CDP-2-C-methyl-D-erythritol + ATP = 4-CDP-2-C-methyl-D-erythritol 2-phosphate + ADP + H(+). Its pathway is isoprenoid biosynthesis; isopentenyl diphosphate biosynthesis via DXP pathway; isopentenyl diphosphate from 1-deoxy-D-xylulose 5-phosphate: step 3/6. In terms of biological role, catalyzes the phosphorylation of the position 2 hydroxy group of 4-diphosphocytidyl-2C-methyl-D-erythritol. The chain is 4-diphosphocytidyl-2-C-methyl-D-erythritol kinase from Shewanella pealeana (strain ATCC 700345 / ANG-SQ1).